Reading from the N-terminus, the 412-residue chain is MSFIQKQDKEIYEVIQNEFNRQNNNIELIASENFVSEAVMEAQGSVLTNKYAEGYPNRRYYGGCEYVDVSETLAIDRAKKLFGAEHVNVQPHSGSQANMAVYLVALEHGDTVLGMNLSHGGHLTHGAPVNFSGQFYNFVEYGVDQENEQIDYDEVLKVAKEHKPKLIVAGASAYSRTIDFKRFKEIADEVGAKLMVDMAHIAGLVAVGLHPNPVEYADFVTTTTHKTLRGPRGGMILCKEEYKKQIDKTIFPGIQSGPLEHVIAAKAVAFGEALQDDFKVYQQQVIQNAKTLANTLTDEGFRVVSGGTDNHLVAVDVKGSVGITGKVAEETLDAIGITCNKNTIPFDQEKPFVTSGIRLGTPAATTRGFDETAFEEVAKIISLVLKDPENEKALAEGKERVNTLTSKHPLYN.

Residues Leu-117 and 121-123 (GHL) contribute to the (6S)-5,6,7,8-tetrahydrofolate site. An N6-(pyridoxal phosphate)lysine modification is found at Lys-226.

The protein belongs to the SHMT family. As to quaternary structure, homodimer. It depends on pyridoxal 5'-phosphate as a cofactor.

It is found in the cytoplasm. The enzyme catalyses (6R)-5,10-methylene-5,6,7,8-tetrahydrofolate + glycine + H2O = (6S)-5,6,7,8-tetrahydrofolate + L-serine. It functions in the pathway one-carbon metabolism; tetrahydrofolate interconversion. Its pathway is amino-acid biosynthesis; glycine biosynthesis; glycine from L-serine: step 1/1. Catalyzes the reversible interconversion of serine and glycine with tetrahydrofolate (THF) serving as the one-carbon carrier. This reaction serves as the major source of one-carbon groups required for the biosynthesis of purines, thymidylate, methionine, and other important biomolecules. Also exhibits THF-independent aldolase activity toward beta-hydroxyamino acids, producing glycine and aldehydes, via a retro-aldol mechanism. This chain is Serine hydroxymethyltransferase, found in Staphylococcus saprophyticus subsp. saprophyticus (strain ATCC 15305 / DSM 20229 / NCIMB 8711 / NCTC 7292 / S-41).